The sequence spans 245 residues: Nodulation protein G (245 aa).

Position 11–35 (Val11–Leu35) interacts with NAD(+). Residue Ser139 participates in substrate binding. The Proton acceptor role is filled by Tyr152.

The protein belongs to the short-chain dehydrogenases/reductases (SDR) family.

Its function is as follows. Proposed to modify Nod factor fatty acyl chain. The protein is Nodulation protein G (nodG) of Rhizobium meliloti (strain 1021) (Ensifer meliloti).